A 365-amino-acid chain; its full sequence is Chaperone protein DnaJ (365 aa).

A J domain is found at 4-70; the sequence is DYYKILGVDR…QKRRMYDQTG (67 aa). A CR-type zinc finger spans residues 139–220; sequence GTEKRIKYRR…CNGTGTVVVN (82 aa). Cysteine 152, cysteine 155, cysteine 168, cysteine 171, cysteine 194, cysteine 197, cysteine 208, and cysteine 211 together coordinate Zn(2+). CXXCXGXG motif repeat units lie at residues 152–159, 168–175, 194–201, and 208–215; these read CPDCNGTG, CPTCNGTG, CQTCGGRG, and CPRCNGTG.

It belongs to the DnaJ family. In terms of assembly, homodimer. Zn(2+) serves as cofactor.

It is found in the cytoplasm. In terms of biological role, participates actively in the response to hyperosmotic and heat shock by preventing the aggregation of stress-denatured proteins and by disaggregating proteins, also in an autonomous, DnaK-independent fashion. Unfolded proteins bind initially to DnaJ; upon interaction with the DnaJ-bound protein, DnaK hydrolyzes its bound ATP, resulting in the formation of a stable complex. GrpE releases ADP from DnaK; ATP binding to DnaK triggers the release of the substrate protein, thus completing the reaction cycle. Several rounds of ATP-dependent interactions between DnaJ, DnaK and GrpE are required for fully efficient folding. Also involved, together with DnaK and GrpE, in the DNA replication of plasmids through activation of initiation proteins. The polypeptide is Chaperone protein DnaJ (Thermoplasma acidophilum (strain ATCC 25905 / DSM 1728 / JCM 9062 / NBRC 15155 / AMRC-C165)).